The following is a 433-amino-acid chain: Histidinol dehydrogenase homolog (433 aa).

2 residues coordinate Zn(2+): Q249 and H252. Catalysis depends on proton acceptor residues E319 and H320. Residues D353 and H412 each contribute to the Zn(2+) site.

The protein belongs to the histidinol dehydrogenase family. Zn(2+) is required as a cofactor.

This is Histidinol dehydrogenase homolog from Ruegeria pomeroyi (strain ATCC 700808 / DSM 15171 / DSS-3) (Silicibacter pomeroyi).